A 148-amino-acid polypeptide reads, in one-letter code: 1,4-dihydroxy-2-naphthoyl-CoA hydrolase (148 aa).

Asp-15 is an active-site residue.

Belongs to the 4-hydroxybenzoyl-CoA thioesterase family. DHNA-CoA hydrolase subfamily.

The enzyme catalyses 1,4-dihydroxy-2-naphthoyl-CoA + H2O = 1,4-dihydroxy-2-naphthoate + CoA + H(+). Its pathway is cofactor biosynthesis; phylloquinone biosynthesis. The protein operates within quinol/quinone metabolism; 1,4-dihydroxy-2-naphthoate biosynthesis; 1,4-dihydroxy-2-naphthoate from chorismate: step 7/7. Functionally, catalyzes the hydrolysis of 1,4-dihydroxy-2-naphthoyl-CoA (DHNA-CoA) to 1,4-dihydroxy-2-naphthoate (DHNA), a reaction involved in phylloquinone (vitamin K1) biosynthesis. The chain is 1,4-dihydroxy-2-naphthoyl-CoA hydrolase from Nostoc punctiforme (strain ATCC 29133 / PCC 73102).